Here is a 169-residue protein sequence, read N- to C-terminus: 2-C-methyl-D-erythritol 2,4-cyclodiphosphate synthase (169 aa).

Residues D13 and H15 each coordinate a divalent metal cation. 4-CDP-2-C-methyl-D-erythritol 2-phosphate contacts are provided by residues 13–15 (DIH) and 40–41 (HS). H48 is an a divalent metal cation binding site. 4-CDP-2-C-methyl-D-erythritol 2-phosphate is bound by residues 62 to 64 (DIG), 138 to 141 (TTNE), and R148.

The protein belongs to the IspF family. Homotrimer. A divalent metal cation serves as cofactor.

The enzyme catalyses 4-CDP-2-C-methyl-D-erythritol 2-phosphate = 2-C-methyl-D-erythritol 2,4-cyclic diphosphate + CMP. It functions in the pathway isoprenoid biosynthesis; isopentenyl diphosphate biosynthesis via DXP pathway; isopentenyl diphosphate from 1-deoxy-D-xylulose 5-phosphate: step 4/6. Functionally, involved in the biosynthesis of isopentenyl diphosphate (IPP) and dimethylallyl diphosphate (DMAPP), two major building blocks of isoprenoid compounds. Catalyzes the conversion of 4-diphosphocytidyl-2-C-methyl-D-erythritol 2-phosphate (CDP-ME2P) to 2-C-methyl-D-erythritol 2,4-cyclodiphosphate (ME-CPP) with a corresponding release of cytidine 5-monophosphate (CMP). The chain is 2-C-methyl-D-erythritol 2,4-cyclodiphosphate synthase from Akkermansia muciniphila (strain ATCC BAA-835 / DSM 22959 / JCM 33894 / BCRC 81048 / CCUG 64013 / CIP 107961 / Muc).